The sequence spans 116 residues: MAVIQFIQGVNEDVIPDVRLTRSRDGSTGTATFRFANPKVLEAQSSVKGNITGMYLIDEEGQLVTRDVNARFVNGKPQGIEAVYIMQSKEDWDRFMRFMERYSEDNGLSFTKANNS.

Belongs to the Psb28 family. Part of the photosystem II complex.

It localises to the plastid. It is found in the chloroplast thylakoid membrane. The polypeptide is Photosystem II reaction center Psb28 protein (Guillardia theta (Cryptophyte)).